The chain runs to 201 residues: 3-isopropylmalate dehydratase small subunit (201 aa).

It belongs to the LeuD family. LeuD type 1 subfamily. In terms of assembly, heterodimer of LeuC and LeuD.

The catalysed reaction is (2R,3S)-3-isopropylmalate = (2S)-2-isopropylmalate. It functions in the pathway amino-acid biosynthesis; L-leucine biosynthesis; L-leucine from 3-methyl-2-oxobutanoate: step 2/4. In terms of biological role, catalyzes the isomerization between 2-isopropylmalate and 3-isopropylmalate, via the formation of 2-isopropylmaleate. The protein is 3-isopropylmalate dehydratase small subunit of Jannaschia sp. (strain CCS1).